The following is a 1233-amino-acid chain: Hemocyanin A-type, units Ode to Odg (1233 aa).

The segment at 1 to 4 is ODD; sequence EGNE. The ODE stretch occupies residues 5-422; that stretch reads YLVRKNVERL…KQDADIDIPL (418 aa). Position 45 (His45) interacts with Cu cation. The cysteines at positions 51 and 62 are disulfide-linked. The segment at residues 63 to 65 is a cross-link (2'-(S-cysteinyl)-histidine (Cys-His)); sequence CLH. Residues His65, His74, His186, His190, and His217 each coordinate Cu cation. Disulfide bonds link Cys176–Cys243 and Cys334–Cys340. N-linked (GlcNAc...) asparagine glycosylation is present at Asn392. Residues 423 to 839 form an ODF region; it reads NHIRRNVESL…KEIEKEAVRG (417 aa). His463 lines the Cu cation pocket. The cysteines at positions 468 and 478 are disulfide-linked. Positions 479–481 form a cross-link, 2'-(S-cysteinyl)-histidine (Cys-His); that stretch reads CLH. Residues His481 and His490 each contribute to the Cu cation site. An N-linked (GlcNAc...) asparagine glycan is attached at Asn538. 2 disulfide bridges follow: Cys589–Cys656 and Cys743–Cys748. The Cu cation site is built by His599, His603, and His630. Residues 840–1233 are ODG; that stretch reads TIIRKNVNSL…VFLAPAKTTH (394 aa). Residue His880 participates in Cu cation binding. Residues Cys886 and Cys896 are joined by a disulfide bond. N-linked (GlcNAc...) asparagine glycosylation is present at Asn890. Positions 897–899 form a cross-link, 2'-(S-cysteinyl)-histidine (Cys-His); sequence CQH. His899, His908, His1008, His1012, and His1039 together coordinate Cu cation. 2 disulfides stabilise this stretch: Cys998–Cys1065 and Cys1152–Cys1158.

Belongs to the tyrosinase family. Hemocyanin subfamily. As to quaternary structure, decamers of large identical subunits (350 kDa), each containing 7 globular oxygen-binding domains: ODA, ODB, ODC, ODD, ODE, ODF, and ODG. Cu(2+) is required as a cofactor.

In terms of biological role, hemocyanins are copper-containing oxygen carriers occurring freely dissolved in the hemolymph of many mollusks and arthropods. The sequence is that of Hemocyanin A-type, units Ode to Odg from Enteroctopus dofleini (North Pacific giant octopus).